The primary structure comprises 939 residues: MNEDQFPKAYDPKSSETGVYSFWERSGIFVANASSEKPAYSIVMPPPNVTGILHMGHALVNTLQDTLIRYKRMQGFEVCWVPGTDHAGIATQTVVERHLKASLGKQRTDFSREEFLKHVWDWKEKSQNVILSQLRQLGCSCDWSRQRFTMDPGANRAVKKAFKILFDKGVIYRGYYLVNWDPILQTALADDEVEYEERDGWLYYIRYQVVNSEEFITVATTRPETLLGDTAIAVSPEDLRYSHLIGAKVVVPFVNREIPIIGDFSVDASFGTGAVKITPAHDKDDYKTGMNHQLPMINILTPTGEINENGGIFTGLSREVARENIITSLEALGLFVKKEAYSSRVGVSYRSGAIIEPYLSKQWFVSVDSFRDSLRGFVNSEEIRIFPPEFVRNYLTWVNNLKDWCISRQLWWGHRIPVWHNKHDENVICFDGEGGPEEVMRDPESWYQDPDVLDTWFSSGLWPLTCFGWPDENSLDLKKFYPTAVLVTGHDILFFWVTRMVLMCSAMVDTEPFSDVFLHGLIFGKSYREYDEKGEWFYVSGERKRDYDKGKALPKNVVAKWEKLSKSKGNVIDPIEMIEAYGADAVRLTLCSCANRGEQIDLDYHLFEEYKNFINKLWNGARFIFGHISELTSRDLEEGVNQDLLGLEDFYILDRFNELLDLIDGHYNCYSFDKIASLAYDFFKNDLCSTYLEIIKPTLFGKQDSDQQRATKRKLLATLLINILGVLHPIVPYITETLFQKLKATLGTVENGKGDSVTGHAVSMLRSEACMVAEYPKPIHVAFPQGLRESFGIAERLVYTIRNIRGEMQLDPREPLQAFVISSEKKELVDVCIPIMCALGGVKTVEQLAEAPKDSIFSLGVVEGIQVGVILPPEHLAKERVRLEKEKTRLEKSIDSVSKLLASEDFRTRANPSLVQAKKDSLRNSQRELQSILDKLASL.

Residues 47 to 57 (PNVTGILHMGH) carry the 'HIGH' region motif. Positions 563–567 (KLSKS) match the 'KMSKS' region motif. Lys566 lines the ATP pocket. Residues 874 to 939 (EHLAKERVRL…QSILDKLASL (66 aa)) adopt a coiled-coil conformation.

This sequence belongs to the class-I aminoacyl-tRNA synthetase family. ValS type 1 subfamily. As to quaternary structure, monomer.

The protein resides in the cytoplasm. The catalysed reaction is tRNA(Val) + L-valine + ATP = L-valyl-tRNA(Val) + AMP + diphosphate. Its function is as follows. Catalyzes the attachment of valine to tRNA(Val). As ValRS can inadvertently accommodate and process structurally similar amino acids such as threonine, to avoid such errors, it has a 'posttransfer' editing activity that hydrolyzes mischarged Thr-tRNA(Val) in a tRNA-dependent manner. This chain is Valine--tRNA ligase, found in Chlamydia trachomatis serovar A (strain ATCC VR-571B / DSM 19440 / HAR-13).